A 631-amino-acid chain; its full sequence is tRNA 5-methylaminomethyl-2-thiouridine biosynthesis bifunctional protein MnmC (631 aa).

A tRNA (mnm(5)s(2)U34)-methyltransferase region spans residues 1–243 (MITDLRPPAM…KREMLTGRLP (243 aa)). An FAD-dependent cmnm(5)s(2)U34 oxidoreductase region spans residues 261–631 (IGAGIAGAAL…GRLYRNQLTV (371 aa)).

It in the N-terminal section; belongs to the methyltransferase superfamily. tRNA (mnm(5)s(2)U34)-methyltransferase family. The protein in the C-terminal section; belongs to the DAO family. Requires FAD as cofactor.

It localises to the cytoplasm. It catalyses the reaction 5-aminomethyl-2-thiouridine(34) in tRNA + S-adenosyl-L-methionine = 5-methylaminomethyl-2-thiouridine(34) in tRNA + S-adenosyl-L-homocysteine + H(+). Its function is as follows. Catalyzes the last two steps in the biosynthesis of 5-methylaminomethyl-2-thiouridine (mnm(5)s(2)U) at the wobble position (U34) in tRNA. Catalyzes the FAD-dependent demodification of cmnm(5)s(2)U34 to nm(5)s(2)U34, followed by the transfer of a methyl group from S-adenosyl-L-methionine to nm(5)s(2)U34, to form mnm(5)s(2)U34. The protein is tRNA 5-methylaminomethyl-2-thiouridine biosynthesis bifunctional protein MnmC of Marinobacter nauticus (strain ATCC 700491 / DSM 11845 / VT8) (Marinobacter aquaeolei).